The chain runs to 509 residues: Nucleoprotein (509 aa).

Residues 1–404 (MSSVLKAYER…ANTLAKLTTA (404 aa)) form a ncore region. 5 residues coordinate RNA: Lys-180, Arg-195, Tyr-260, Tyr-350, and Arg-354. The interval 405 to 509 (NRGADTRGGV…LNAALGDLDI (105 aa)) is ntail. Positions 452-477 (GTHDDEMPPLEEEEEDDTSAGPRTGP) are disordered. A compositionally biased stretch (acidic residues) spans 458–469 (MPPLEEEEEDDT).

This sequence belongs to the paramyxoviruses nucleocapsid family. In terms of assembly, homomultimer; forms the nucleocapsid. Binds to the viral genomic RNA. N0 interacts with the phosphoprotein (via N-terminus); this interaction allows P to chaperon N0 to avoid N polymerization before encapsidation. Interacts as N-RNA template with the phosphoprotein (via C-terminus); this interaction positions the polymerase on the template.

The protein resides in the virion. Its subcellular location is the host cytoplasm. Its function is as follows. Forms the helical nucleocapsid (NC), protecting the genome from nucleases. The encapsidated genomic RNA serves as template for transcription and replication; encapsidation by N is coupled to RNA synthesis. Forms the encapsidation complex with the phosphoprotein protein P. Before encapsidation, the newly synthesized free N protein, so-called N0, is chaperoned by P. In Canis lupus familiaris (Dog), this protein is Nucleoprotein (NP).